The following is a 317-amino-acid chain: Integrin-binding sialoprotein (317 aa).

The first 16 residues, 1-16 (MKTALILLSILGMACA), serve as a signal peptide directing secretion. Serine 31, serine 67, serine 74, serine 75, serine 94, and serine 100 each carry phosphoserine. The interval 58–254 (FPVQGSSDSS…RTTSPPFGKT (197 aa)) is disordered. A compositionally biased stretch (acidic residues) spans 66–102 (SSEENGDDSSEEEEEEEETSNEGENNEESNEDEDSEA). Asparagine 104 carries N-linked (GlcNAc...) asparagine glycosylation. O-linked (GalNAc...) threonine glycans are attached at residues threonine 119 and threonine 122. At serine 149 the chain carries Phosphoserine. Over residues 149–173 (SDEEEEEEEEGNENEESEAEVDENE) the composition is skewed to acidic residues. N-linked (GlcNAc...) asparagine glycosylation is found at asparagine 177, asparagine 182, and asparagine 190. Residues 222–232 (KGTSKTTTSPN) are compositionally biased toward polar residues. Residues threonine 227, threonine 228, threonine 229, threonine 238, and threonine 239 are each glycosylated (O-linked (GalNAc...) threonine). Serine 280 is modified (phosphoserine). The short motif at 286-288 (RGD) is the Integrin-binding motif element. A sulfotyrosine mark is found at tyrosine 313 and tyrosine 314.

In terms of assembly, monomer. Interacts with integrins; the interaction promotes cell adhesion. In terms of processing, N-glycosylated; glycans consist of sialylated and core-fucosylated bi-, tri- and tetraantennary chains. Post-translationally, O-glycosylated at eight sites; mucin-type glycans contain Gal, GlcNAc, GalNAc and terminal NeuAc. Expressed in bone (at protein level). Expressed in trophoblast cells of placenta (at protein level). Expressed in brain.

It localises to the secreted. Binds tightly to hydroxyapatite. Appears to form an integral part of the mineralized matrix. Probably important to cell-matrix interaction. Promotes adhesion and migration of various cells via the alpha-V/beta-3 integrin receptor (ITGAV:ITGB3). The sequence is that of Integrin-binding sialoprotein (IBSP) from Homo sapiens (Human).